A 106-amino-acid polypeptide reads, in one-letter code: UPF0145 protein Cthe_0398 (106 aa).

Belongs to the UPF0145 family.

The sequence is that of UPF0145 protein Cthe_0398 from Acetivibrio thermocellus (strain ATCC 27405 / DSM 1237 / JCM 9322 / NBRC 103400 / NCIMB 10682 / NRRL B-4536 / VPI 7372) (Clostridium thermocellum).